Here is a 504-residue protein sequence, read N- to C-terminus: Ectoine/proline transporter ProP (504 aa).

11 helical membrane passes run 41–61 (FMEW…TAVF), 71–91 (LLAV…GGLV), 118–138 (LIGL…LLYL), 169–189 (FFGA…ASVV), 207–227 (DFGW…AVYL), 272–292 (LLIG…LTSY), 309–329 (AAVT…VGMW), 337–357 (PVYA…FLIM), 362–382 (IGAV…YVAL), 399–419 (GMGI…PLIT), and 430–450 (IVPA…LLFM). The segment at 477-504 (NQDEDPNIDLSHMPFPDEENVGAEKQNA) is disordered.

It belongs to the major facilitator superfamily.

The protein resides in the cell membrane. With respect to regulation, uptake is activated by osmotic stress. Inhibited by CCCP. In terms of biological role, involved in the uptake of osmoprotectants. Can transport ectoine and proline. Protons are probably the coupling ions. This is Ectoine/proline transporter ProP from Corynebacterium glutamicum (strain ATCC 13032 / DSM 20300 / JCM 1318 / BCRC 11384 / CCUG 27702 / LMG 3730 / NBRC 12168 / NCIMB 10025 / NRRL B-2784 / 534).